The sequence spans 243 residues: Homeobox protein nob-1 (243 aa).

Positions 1 to 12 (MISVMQQMINND) are enriched in polar residues. 2 disordered regions span residues 1-23 (MISV…SITS) and 40-67 (SIQG…TGMV). A DNA-binding region (homeobox) is located at residues 162–221 (GKKKRQPYKKDQISRLEYEYSVNQYLTNKRRSELSAQLMLDEKQVKVWFQNRRMKDKKLR).

This sequence belongs to the abd-b homeobox family. In terms of assembly, interacts with nuclear receptor nhr-25. Interacts with geminin homolog gmn-1. Interacts with homeodomain protein ceh-20.

It is found in the nucleus. In terms of biological role, transcription factor, involved in posterior embryonic patterning, morphogenetic movements of the posterior hypodermis, and cell fate specification. Binds to the 5'-TAGT-3' motif in regulatory elements of genes, including Meis protein psa-3 and microRNA mir-57. Involved in a negative regulatory loop with mir-57 to specify posterior cell identities. Required for asymmetric division of the T hypodermal cell, acting via the regulation of asymmetric expression of psa-3 in cooperation with ceh-20 and the Wnt-MAPK pathway. Involved in the regulation of the onset of non-apoptotic cell death in the linker cell, acting together with the Wnt signaling pathway. Involved in promoting embryogenesis, in concert with orphan nuclear receptor nhr-25. May regulate expression of transcription factor dmd-3. The polypeptide is Homeobox protein nob-1 (Caenorhabditis elegans).